A 58-amino-acid polypeptide reads, in one-letter code: Ribosome biogenesis protein Nop10 (58 aa).

This sequence belongs to the NOP10 family.

Involved in ribosome biogenesis; more specifically in 18S rRNA pseudouridylation and in cleavage of pre-rRNA. The polypeptide is Ribosome biogenesis protein Nop10 (Thermococcus onnurineus (strain NA1)).